Here is a 443-residue protein sequence, read N- to C-terminus: L-ornithine N(5)-monooxygenase (443 aa).

FAD is bound by residues 45-53 and Gln64; that span reads DKQGDYRWH. Position 69 (Lys69) interacts with substrate. Val130 lines the FAD pocket. NADP(+)-binding positions include 215-218 and Arg240; that span reads GGQS. Substrate-binding positions include 254 to 257 and Asn284; that span reads NEVF. Residue 284 to 286 coordinates NADP(+); the sequence is NYS. 407–409 is an FAD binding site; that stretch reads TLL. Ser410 contacts substrate.

The protein belongs to the lysine N(6)-hydroxylase/L-ornithine N(5)-oxygenase family. As to quaternary structure, homotetramer. FAD serves as cofactor.

The protein resides in the cell inner membrane. It catalyses the reaction L-ornithine + NADPH + O2 = N(5)-hydroxy-L-ornithine + NADP(+) + H2O. Its pathway is siderophore biosynthesis; pyoverdin biosynthesis. Its function is as follows. Catalyzes the conversion of L-ornithine to N(5)-hydroxyornithine, the first step in the biosynthesis of all hydroxamate-containing siderophores, such as pyoverdin. Pyoverdin is a hydroxamate siderophore composed of a 6,7-dihydroxyquinoline-containing fluorescent chromophore joined to the N-terminus of a partly cyclic octapeptide (D-Ser-L-Arg-D-Ser-L-N(5)-OH-Orn-L-Lys-L-N(5)-OH-Orn-L-Thr-L-Thr in strain PAO1). Specific for NADPH, which plays a role in stabilization of the C4a-hydroperoxyflavin intermediate. The sequence is that of L-ornithine N(5)-monooxygenase from Pseudomonas aeruginosa (strain ATCC 15692 / DSM 22644 / CIP 104116 / JCM 14847 / LMG 12228 / 1C / PRS 101 / PAO1).